We begin with the raw amino-acid sequence, 587 residues long: Arginine--tRNA ligase (587 aa).

The short motif at 127 to 137 (PNLAKEMHVGH) is the 'HIGH' region element.

It belongs to the class-I aminoacyl-tRNA synthetase family. Monomer.

It localises to the cytoplasm. It catalyses the reaction tRNA(Arg) + L-arginine + ATP = L-arginyl-tRNA(Arg) + AMP + diphosphate. The polypeptide is Arginine--tRNA ligase (Pseudomonas aeruginosa (strain UCBPP-PA14)).